The primary structure comprises 228 residues: DNA-binding response regulator MtrA (228 aa).

Residues 7-120 enclose the Response regulatory domain; that stretch reads RILVVDDDAS…ELVARVRARL (114 aa). D56 bears the 4-aspartylphosphate mark. A DNA-binding region (ompR/PhoB-type) is located at residues 128–227; that stretch reads AEMLSIADVE…VRGVGYKAGP (100 aa).

Post-translationally, phosphorylated by MtrB.

Member of the two-component regulatory system MtrA/MtrB. This Mycobacterium bovis (strain ATCC BAA-935 / AF2122/97) protein is DNA-binding response regulator MtrA (mtrA).